The sequence spans 171 residues: Shikimate kinase (171 aa).

An ATP-binding site is contributed by 14–19 (GAGKST). Residue Ser-18 coordinates Mg(2+). Residues Asp-36, Arg-60, and Gly-82 each contribute to the substrate site. Arg-120 contributes to the ATP binding site. Position 139 (Arg-139) interacts with substrate. Gln-156 contributes to the ATP binding site.

It belongs to the shikimate kinase family. As to quaternary structure, monomer. The cofactor is Mg(2+).

The protein resides in the cytoplasm. It carries out the reaction shikimate + ATP = 3-phosphoshikimate + ADP + H(+). The protein operates within metabolic intermediate biosynthesis; chorismate biosynthesis; chorismate from D-erythrose 4-phosphate and phosphoenolpyruvate: step 5/7. Functionally, catalyzes the specific phosphorylation of the 3-hydroxyl group of shikimic acid using ATP as a cosubstrate. In Shewanella baltica (strain OS195), this protein is Shikimate kinase.